A 316-amino-acid polypeptide reads, in one-letter code: MST50-interacting protein 11 (316 aa).

WD repeat units lie at residues 13 to 53 (GHNG…TSYG), 61 to 100 (GHSHIVSDCVISSDGAYALSASWDKTLRLWELATGTTTRR), 103 to 142 (GHTNDVLSVSFSADNRQIVSGSRDRSIKLWNTLGDCKYTI), 146 to 187 (GHSE…LQTD), 190 to 229 (GHTGYINTVTISPDGSLCASGGKDGTTMLWDLNESKHLYS), 231 to 269 (NANDEIHALVFSPNRYWLCAATASSIIIFDLEKKSKVDE), and 281 to 316 (SREPECISLAWSADGQTLFAGYTDNIIRAWGVMSRA).

This sequence belongs to the WD repeat G protein beta family. Ribosomal protein RACK1 subfamily. As to quaternary structure, interacts with MST50 and MCK1.

Functionally, involved in regulating the cell wall integrity and MPS1 activation via its interaction with the MAPKKK MCK1. In Pyricularia oryzae (strain 70-15 / ATCC MYA-4617 / FGSC 8958) (Rice blast fungus), this protein is MST50-interacting protein 11.